A 207-amino-acid chain; its full sequence is Ribosomal RNA small subunit methyltransferase G (207 aa).

S-adenosyl-L-methionine is bound by residues G77, F82, 100 to 102 (ERS), and R141.

It belongs to the methyltransferase superfamily. RNA methyltransferase RsmG family.

It localises to the cytoplasm. Specifically methylates the N7 position of a guanine in 16S rRNA. The protein is Ribosomal RNA small subunit methyltransferase G of Borrelia turicatae (strain 91E135).